Consider the following 177-residue polypeptide: ATP synthase subunit b (177 aa).

The helical transmembrane segment at 29 to 49 (FFFVLAIFLIVLAVIGTFVVP) threads the bilayer.

The protein belongs to the ATPase B chain family. In terms of assembly, F-type ATPases have 2 components, F(1) - the catalytic core - and F(0) - the membrane proton channel. F(1) has five subunits: alpha(3), beta(3), gamma(1), delta(1), epsilon(1). F(0) has three main subunits: a(1), b(2) and c(10-14). The alpha and beta chains form an alternating ring which encloses part of the gamma chain. F(1) is attached to F(0) by a central stalk formed by the gamma and epsilon chains, while a peripheral stalk is formed by the delta and b chains.

It is found in the cell membrane. F(1)F(0) ATP synthase produces ATP from ADP in the presence of a proton or sodium gradient. F-type ATPases consist of two structural domains, F(1) containing the extramembraneous catalytic core and F(0) containing the membrane proton channel, linked together by a central stalk and a peripheral stalk. During catalysis, ATP synthesis in the catalytic domain of F(1) is coupled via a rotary mechanism of the central stalk subunits to proton translocation. Functionally, component of the F(0) channel, it forms part of the peripheral stalk, linking F(1) to F(0). The chain is ATP synthase subunit b from Mycolicibacterium paratuberculosis (strain ATCC BAA-968 / K-10) (Mycobacterium paratuberculosis).